The following is a 212-amino-acid chain: Pyrrolidone-carboxylate peptidase (212 aa).

Catalysis depends on residues glutamate 78, cysteine 141, and histidine 165.

It belongs to the peptidase C15 family. In terms of assembly, homotetramer.

The protein localises to the cytoplasm. It catalyses the reaction Release of an N-terminal pyroglutamyl group from a polypeptide, the second amino acid generally not being Pro.. Its function is as follows. Removes 5-oxoproline from various penultimate amino acid residues except L-proline. The sequence is that of Pyrrolidone-carboxylate peptidase (pcp) from Staphylococcus aureus.